We begin with the raw amino-acid sequence, 834 residues long: Protein Jade-1 (834 aa).

A disordered region spans residues 1–46 (MKRGRLPSSSEDSDDNGSLSTTWSQHSRSQHGRSSTCSRPEDRKPS). Residues 24–35 (SQHSRSQHGRSS) show a composition bias toward low complexity. The interval 61–81 (DSYQLNPDDYYVLADPWRQEW) is interaction with KAT7/HBO1 and histones. The interval 81 to 189 (WEKGVQVPVS…EQRCYDNMNH (109 aa)) is interaction with histones. Ser-90 carries the phosphoserine modification. At Thr-93 the chain carries Phosphothreonine. Residue Lys-115 forms a Glycyl lysine isopeptide (Lys-Gly) (interchain with G-Cter in SUMO2) linkage. Residues 204–254 (DVVCDVCQSPDGEDGNEMVFCDKCNICVHQACYGILKVPEGSWLCRTCALG) form a PHD-type 1 zinc finger. The segment at 256 to 290 (QPKCLLCPKKGGAMKPTRSGTKWVHVSCALWIPEV) adopts a C2HC pre-PHD-type zinc-finger fold. Residues 314–370 (LVCSLCNEKFGASIQCSVKNCRTAFHVTCAFDRGLEMKTILAENDEVKFKSYCPKHS) form a PHD-type 2 zinc finger. The tract at residues 367–409 (PKHSSHRKPEEGLGEGAAQENGAPESSPQSPLEPYGSLEPNRE) is disordered. Residue Lys-573 forms a Glycyl lysine isopeptide (Lys-Gly) (interchain with G-Cter in SUMO2) linkage. Disordered regions lie at residues 589 to 621 (HPLK…CGRR) and 676 to 716 (DKSF…GTRK). The residue at position 603 (Ser-603) is a Phosphoserine. N6-acetyllysine is present on Lys-609. Residues Ser-704 and Ser-735 each carry the phosphoserine modification. A disordered region spans residues 738 to 819 (KSWGGFRIPK…EKKCIHASST (82 aa)). Basic and acidic residues-rich tracts occupy residues 747–768 (KKGE…HSDC) and 777–790 (PAKE…RADS).

It belongs to the JADE family. As to quaternary structure, component of the HBO1 complex composed at least of ING4 or ING5, KAT7/HBO1, MEAF6, and one of JADE1, JADE2 and JADE3. Interacts with NPHP4. As to expression, highly expressed in kidney. Also present in liver (at protein level).

It localises to the nucleus. The protein resides in the chromosome. The protein localises to the cytoplasm. Its subcellular location is the cytoskeleton. It is found in the cilium basal body. Scaffold subunit of some HBO1 complexes, which have a histone H4 acetyltransferase activity. Plays a key role in HBO1 complex by directing KAT7/HBO1 specificity towards histone H4 acetylation (H4K5ac, H4K8ac and H4K12ac), regulating DNA replication initiation, regulating DNA replication initiation. May also promote acetylation of nucleosomal histone H4 by KAT5. Promotes apoptosis. May act as a renal tumor suppressor. Negatively regulates canonical Wnt signaling; at least in part, cooperates with NPHP4 in this function. In Mus musculus (Mouse), this protein is Protein Jade-1 (Jade1).